The primary structure comprises 88 residues: Small ribosomal subunit protein bS20 (88 aa).

A disordered region spans residues 1–25 (MANTAQALKRIRQTNKARAQNASQR). Over residues 16-25 (KARAQNASQR) the composition is skewed to polar residues.

This sequence belongs to the bacterial ribosomal protein bS20 family.

Binds directly to 16S ribosomal RNA. This Dichelobacter nodosus (strain VCS1703A) protein is Small ribosomal subunit protein bS20.